A 106-amino-acid chain; its full sequence is MRWMKIMSEDMKQEQSGEGRGGRGGPARPLASARRPFFRRRKVCPFCADKGLKIDYKDPKMLSRYITERGKMVPSRITGVCAPHQRKLSVAIKRARNIALLPFIVK.

The segment at 1–32 (MRWMKIMSEDMKQEQSGEGRGGRGGPARPLAS) is disordered. Residues 7–21 (MSEDMKQEQSGEGRG) show a composition bias toward basic and acidic residues.

It belongs to the bacterial ribosomal protein bS18 family. Part of the 30S ribosomal subunit. Forms a tight heterodimer with protein bS6.

In terms of biological role, binds as a heterodimer with protein bS6 to the central domain of the 16S rRNA, where it helps stabilize the platform of the 30S subunit. In Magnetococcus marinus (strain ATCC BAA-1437 / JCM 17883 / MC-1), this protein is Small ribosomal subunit protein bS18.